The chain runs to 272 residues: Rhomboid-type serine protease B (272 aa).

5 helical membrane passes run 30–50 (IVLLVILAFWLLELQTIWSVV), 72–92 (PFIHVGFFHAFVNLLALTPLL), 103–123 (TAVALFIGPLSTFPAGIYILV), 133–153 (AVVGASVWIFLLLGSEAIKTF), and 164–184 (TKIPTWTSPLFACALVSIFVP). Serine 138 functions as the Nucleophile in the catalytic mechanism. Asparagine 185 is a glycosylation site (N-linked (GlcNAc...) asparagine). The chain crosses the membrane as a helical span at residues 186–206 (TSFLGHLSAIIIGYLLGLGYL). Histidine 191 is an active-site residue.

It belongs to the peptidase S54 family.

The protein resides in the membrane. It carries out the reaction Cleaves type-1 transmembrane domains using a catalytic dyad composed of serine and histidine that are contributed by different transmembrane domains.. Rhomboid protease that catalyzes intramembrane proteolysis. Required for transcription factor srbA activation by mediating its release from the membrane and thereby regulating its activity under hypoxic conditions. Essential for iron homeostasis and resistance to azoles such as voriconazole. Required for virulence in murine models of invasive pulmonary aspergillosis (IPA). The protein is Rhomboid-type serine protease B of Aspergillus fumigatus (strain CBS 144.89 / FGSC A1163 / CEA10) (Neosartorya fumigata).